The following is a 2006-amino-acid chain: E3 ubiquitin-protein ligase PRT6 (2006 aa).

A UBR-type zinc finger spans residues 119-189 (GVCGSVWGQN…PDGFCSNHKG (71 aa)). Disordered stretches follow at residues 1167 to 1186 (LSSSMDDDDPRSEFETSDSV) and 1338 to 1380 (DHQP…AGSD). Residues 1338 to 1348 (DHQPHEAENCS) are compositionally biased toward basic and acidic residues. The segment covering 1349–1360 (EKNSVGGPSTLQ) has biased composition (polar residues). Residues 1364 to 1377 (PDIRSRQTSRRPDA) are compositionally biased toward basic and acidic residues. The segment at 1395–1440 (CGHAVHQSCLERYLKSLKERSGRRTVFEGAHIVDLKKKEFLCPVCR) adopts an RING-type; degenerate zinc-finger fold.

Belongs to the E3 ubiquitin-protein ligase UBR1-like family.

It catalyses the reaction S-ubiquitinyl-[E2 ubiquitin-conjugating enzyme]-L-cysteine + [acceptor protein]-L-lysine = [E2 ubiquitin-conjugating enzyme]-L-cysteine + N(6)-ubiquitinyl-[acceptor protein]-L-lysine.. The protein operates within protein modification; protein ubiquitination. In terms of biological role, ubiquitin protein ligase which is a component of the N-end rule pathway with arginine specificity, and functions with the arginyltransferases ATE1 and ATE2. Recognizes and binds to proteins bearing specific N-terminal residues that are destabilizing according to the N-end rule, leading to their ubiquitination and subsequent degradation. Does not participate in degradation of proteins with N-terminal Phe or Leu. The N-end rule pathway regulates seed after-ripening, seedling sugar sensitivity, seedling lipid breakdown, and abscisic acid (ABA) sensitivity of germination. The N-end rule pathway regulates various aspects of leaf and shoot development. Involved in the ubiquitination and subsequent degradation of RAP2-12, an activator of hypoxic gene expression. The ubiquitination occurs after the N-arginylation of RAP2-12 by ATE1 or ATE2 under aerobic conditions. The end-rule pathway plays a role in regulating the timing and amplitude of the immune response following infection with the bacterial pathogen Pseudomonas syringae pv tomato. Regulates the biosynthesis of plant-defense metabolites such as glucosinolates, and the biosynthesis and response to the phytohormone jasmonate (JA), which plays a key role in plant immunity. Controls the expression of specific defense-response genes, activates the synthesis pathway for the phytoalexin camalexin, and influences basal resistance to the hemibiotroph pathogen Pseudomonas syringae pv tomato. Coordinates the mobilization of seed storage reserves and regulates the abundance and activities of several proteases following seed germination. The sequence is that of E3 ubiquitin-protein ligase PRT6 from Arabidopsis thaliana (Mouse-ear cress).